Reading from the N-terminus, the 255-residue chain is NAP1-related protein 2 (255 aa).

Positions 19-60 form a coiled coil; sequence IDAELVLSIEKLQEIQDDLEKINEKASDEVLEVEQKYNVIRK. Residues 213-255 are disordered; sequence NPLTYFNNDADEEDFDGDDDGDEEEKEGDSDEDDDEEDEVGEE. Acidic residues predominate over residues 221–255; that stretch reads DADEEDFDGDDDGDEEEKEGDSDEDDDEEDEVGEE.

This sequence belongs to the nucleosome assembly protein (NAP) family. As to quaternary structure, can form homomeric and heteromeric protein complexes with NRP1. Binds histones H2A and H2B and associates with chromatin in vivo. As to expression, ubiquitous.

Its subcellular location is the cytoplasm. It localises to the nucleus. In terms of biological role, acts as a histone H2A/H2B chaperone in nucleosome assembly, playing a critical role for the correct expression of genes involved in root proliferation and patterning. Required with NRP1 for the maintenance of cell proliferation and differentiation in postembryonic root growth. Involved in both intramolecular and intermolecular somatic homologous recombination. In Arabidopsis thaliana (Mouse-ear cress), this protein is NAP1-related protein 2 (NRP2).